A 337-amino-acid polypeptide reads, in one-letter code: MIEADRLIAADNPTFREEDVIDRAIRPKKLDDYQGQDHVRSQMEIFIKAAQMREEALDHLLIFGPPGLGKTTLANIVANEMGVNIRTTSGPVLEKAGDLAALLTNLEENDILFIDEIHRLSPMVEEVLYPAMEDYQLDIMIGEGPAARSIKIDLPPFTLIGATTRAGSLTSPLRDRFGIVQRLEYYKVEDLQHIVQRSADCLNLSMESEGALEVARRARGTPRIANRLLRRVRDYAEVMSDGNISSEIADKALNMLDVDVRGFDYMDRKLLLAIMEKFDGGPVGLDNIAAAIGEERDTIEDVIEPYLIQQGYLQRTPRGRIVSDRAYLHFGIDKPDK.

The segment at 4 to 186 is large ATPase domain (RuvB-L); sequence ADRLIAADNP…FGIVQRLEYY (183 aa). Residues Ile-25, Arg-26, Gly-67, Lys-70, Thr-71, Thr-72, 133–135, Arg-176, Tyr-186, and Arg-223 contribute to the ATP site; that span reads EDY. Thr-71 serves as a coordination point for Mg(2+). A small ATPAse domain (RuvB-S) region spans residues 187 to 257; the sequence is KVEDLQHIVQ…IADKALNMLD (71 aa). A head domain (RuvB-H) region spans residues 260-337; sequence VRGFDYMDRK…LHFGIDKPDK (78 aa). Arg-296, Arg-315, and Arg-320 together coordinate DNA.

The protein belongs to the RuvB family. Homohexamer. Forms an RuvA(8)-RuvB(12)-Holliday junction (HJ) complex. HJ DNA is sandwiched between 2 RuvA tetramers; dsDNA enters through RuvA and exits via RuvB. An RuvB hexamer assembles on each DNA strand where it exits the tetramer. Each RuvB hexamer is contacted by two RuvA subunits (via domain III) on 2 adjacent RuvB subunits; this complex drives branch migration. In the full resolvosome a probable DNA-RuvA(4)-RuvB(12)-RuvC(2) complex forms which resolves the HJ.

It is found in the cytoplasm. It carries out the reaction ATP + H2O = ADP + phosphate + H(+). In terms of biological role, the RuvA-RuvB-RuvC complex processes Holliday junction (HJ) DNA during genetic recombination and DNA repair, while the RuvA-RuvB complex plays an important role in the rescue of blocked DNA replication forks via replication fork reversal (RFR). RuvA specifically binds to HJ cruciform DNA, conferring on it an open structure. The RuvB hexamer acts as an ATP-dependent pump, pulling dsDNA into and through the RuvAB complex. RuvB forms 2 homohexamers on either side of HJ DNA bound by 1 or 2 RuvA tetramers; 4 subunits per hexamer contact DNA at a time. Coordinated motions by a converter formed by DNA-disengaged RuvB subunits stimulates ATP hydrolysis and nucleotide exchange. Immobilization of the converter enables RuvB to convert the ATP-contained energy into a lever motion, pulling 2 nucleotides of DNA out of the RuvA tetramer per ATP hydrolyzed, thus driving DNA branch migration. The RuvB motors rotate together with the DNA substrate, which together with the progressing nucleotide cycle form the mechanistic basis for DNA recombination by continuous HJ branch migration. Branch migration allows RuvC to scan DNA until it finds its consensus sequence, where it cleaves and resolves cruciform DNA. This chain is Holliday junction branch migration complex subunit RuvB, found in Aliivibrio fischeri (strain ATCC 700601 / ES114) (Vibrio fischeri).